A 283-amino-acid polypeptide reads, in one-letter code: Digeranylgeranylglyceryl phosphate synthase (283 aa).

The next 8 membrane-spanning stretches (helical) occupy residues 21-41 (ITAS…EIDI), 45-65 (LLVF…NDIF), 97-117 (LILG…IAVI), 135-155 (IGNF…GVAG), 158-178 (VMPV…REIV), 204-224 (LYFA…PYIL), 226-246 (IFGI…IYAM), and 261-281 (VSKF…VGAI).

It belongs to the UbiA prenyltransferase family. DGGGP synthase subfamily. Mg(2+) serves as cofactor.

It localises to the cell membrane. It carries out the reaction sn-3-O-(geranylgeranyl)glycerol 1-phosphate + (2E,6E,10E)-geranylgeranyl diphosphate = 2,3-bis-O-(geranylgeranyl)-sn-glycerol 1-phosphate + diphosphate. It functions in the pathway membrane lipid metabolism; glycerophospholipid metabolism. Prenyltransferase that catalyzes the transfer of the geranylgeranyl moiety of geranylgeranyl diphosphate (GGPP) to the C2 hydroxyl of (S)-3-O-geranylgeranylglyceryl phosphate (GGGP). This reaction is the second ether-bond-formation step in the biosynthesis of archaeal membrane lipids. This chain is Digeranylgeranylglyceryl phosphate synthase, found in Methanocaldococcus jannaschii (strain ATCC 43067 / DSM 2661 / JAL-1 / JCM 10045 / NBRC 100440) (Methanococcus jannaschii).